The chain runs to 373 residues: MKILVDENMPYATELFSRLGNVQAVPGRPIPSDALADADALMVRSVTKVNEALLAGTRIGFVGTATAGTDHVDDVWLQQQGIGFSAAPGCNAIAVVEYVFSALMLLAERDGFQLRDKTVGIIGVGNVGSRLDARLKALGVRTLLCDPPRAERGDAGEFWPLEKLVAEADVLTFHTPLNKSGPYNSLHLVDAELLAALPDNRILINACRGAVVDNAALLQALEKGKKLSTVLDVWEPEPELSLPLLARVDIGTAHIAGYTLEGKARGTTQVFEAFSRHLGQPQQIELASLLPVPEFSQIQLNGPLDEGKLKRLMHLVYDVRRDDAPLRKVAGQPGEFDRLRKHYQERREWSSLRVQCDDSASAELLHKLGFLTA.

Substrate-binding residues include S45 and T66. D146 and T175 together coordinate NAD(+). Residue R208 is part of the active site. D232 contacts NAD(+). E237 is a catalytic residue. H254 serves as the catalytic Proton donor. G257 contributes to the NAD(+) binding site. A substrate-binding site is contributed by Y258.

The protein belongs to the D-isomer specific 2-hydroxyacid dehydrogenase family. PdxB subfamily. Homodimer.

The protein resides in the cytoplasm. The enzyme catalyses 4-phospho-D-erythronate + NAD(+) = (R)-3-hydroxy-2-oxo-4-phosphooxybutanoate + NADH + H(+). The protein operates within cofactor biosynthesis; pyridoxine 5'-phosphate biosynthesis; pyridoxine 5'-phosphate from D-erythrose 4-phosphate: step 2/5. Functionally, catalyzes the oxidation of erythronate-4-phosphate to 3-hydroxy-2-oxo-4-phosphonooxybutanoate. This chain is Erythronate-4-phosphate dehydrogenase, found in Serratia proteamaculans (strain 568).